A 522-amino-acid polypeptide reads, in one-letter code: Ribonuclease Y (522 aa).

The chain crosses the membrane as a helical span at residues Trp-2–Leu-22. A KH domain is found at Leu-212–Asp-278. An HD domain is found at Ala-338–Ala-431.

Belongs to the RNase Y family.

Its subcellular location is the cell membrane. In terms of biological role, endoribonuclease that initiates mRNA decay. The protein is Ribonuclease Y of Nitratiruptor sp. (strain SB155-2).